We begin with the raw amino-acid sequence, 131 residues long: Large ribosomal subunit protein eL32 (131 aa).

It belongs to the eukaryotic ribosomal protein eL32 family. In terms of assembly, component of the large ribosomal subunit (LSU). Mature N.crassa ribosomes consist of a small (40S) and a large (60S) subunit. The 40S small subunit contains 1 molecule of ribosomal RNA (18S rRNA) and at least 32 different proteins. The large 60S subunit contains 3 rRNA molecules (26S, 5.8S and 5S rRNA) and at least 42 different proteins.

It is found in the cytoplasm. Its function is as follows. Component of the ribosome, a large ribonucleoprotein complex responsible for the synthesis of proteins in the cell. The small ribosomal subunit (SSU) binds messenger RNAs (mRNAs) and translates the encoded message by selecting cognate aminoacyl-transfer RNA (tRNA) molecules. The large subunit (LSU) contains the ribosomal catalytic site termed the peptidyl transferase center (PTC), which catalyzes the formation of peptide bonds, thereby polymerizing the amino acids delivered by tRNAs into a polypeptide chain. The nascent polypeptides leave the ribosome through a tunnel in the LSU and interact with protein factors that function in enzymatic processing, targeting, and the membrane insertion of nascent chains at the exit of the ribosomal tunnel. The protein is Large ribosomal subunit protein eL32 (crp-63) of Neurospora crassa (strain ATCC 24698 / 74-OR23-1A / CBS 708.71 / DSM 1257 / FGSC 987).